Reading from the N-terminus, the 493-residue chain is Proline--tRNA ligase (493 aa).

The protein belongs to the class-II aminoacyl-tRNA synthetase family. ProS type 3 subfamily. As to quaternary structure, homodimer.

The protein resides in the cytoplasm. The catalysed reaction is tRNA(Pro) + L-proline + ATP = L-prolyl-tRNA(Pro) + AMP + diphosphate. In terms of biological role, catalyzes the attachment of proline to tRNA(Pro) in a two-step reaction: proline is first activated by ATP to form Pro-AMP and then transferred to the acceptor end of tRNA(Pro). The protein is Proline--tRNA ligase of Parabacteroides distasonis (strain ATCC 8503 / DSM 20701 / CIP 104284 / JCM 5825 / NCTC 11152).